Here is a 66-residue protein sequence, read N- to C-terminus: Phylloseptin-H9 (66 aa).

Residues 1 to 22 (MAFLKKSLFLVLFLGLVSLSIC) form the signal peptide. Residues 23-44 (EEEKRETEEEENDQEEDDKSEE) constitute a propeptide that is removed on maturation. The segment at 24–44 (EEKRETEEEENDQEEDDKSEE) is disordered. Over residues 30-41 (EEEENDQEEDDK) the composition is skewed to acidic residues. A Leucine amide modification is found at leucine 65.

In terms of tissue distribution, expressed by the skin glands.

The protein resides in the secreted. Functionally, has antimicrobial activity. In Pithecopus hypochondrialis (Orange-legged leaf frog), this protein is Phylloseptin-H9.